We begin with the raw amino-acid sequence, 185 residues long: Probable nicotinate-nucleotide adenylyltransferase (185 aa).

The protein belongs to the NadD family.

It catalyses the reaction nicotinate beta-D-ribonucleotide + ATP + H(+) = deamido-NAD(+) + diphosphate. Its pathway is cofactor biosynthesis; NAD(+) biosynthesis; deamido-NAD(+) from nicotinate D-ribonucleotide: step 1/1. Functionally, catalyzes the reversible adenylation of nicotinate mononucleotide (NaMN) to nicotinic acid adenine dinucleotide (NaAD). This chain is Probable nicotinate-nucleotide adenylyltransferase, found in Methylorubrum extorquens (strain PA1) (Methylobacterium extorquens).